A 2357-amino-acid chain; its full sequence is Protein transport protein Sec16A (2357 aa).

Disordered regions lie at residues 1–25 and 57–303; these read MQPP…RSVF and FSRQ…STFR. Composition is skewed to low complexity over residues 64–76 and 210–227; these read STPL…SSPP and QMPG…PSGQ. Residues 285 to 303 are compositionally biased toward polar residues; sequence HLQSGSHLANNSDPESTFR. Serine 296, serine 314, and serine 331 each carry phosphoserine. Disordered stretches follow at residues 335 to 359, 508 to 540, 553 to 603, 758 to 828, 924 to 987, 1006 to 1038, and 1059 to 1151; these read NPLA…GSGC, APDA…ARPQ, KPED…TGIF, VQPP…NPPV, LLVQ…SSHQ, VNVY…PNLD, and QELV…APGP. The segment covering 520–536 has biased composition (low complexity); sequence SVSSSYSSRSHGRLSGS. Phosphoserine is present on residues serine 559, serine 569, serine 587, serine 589, and serine 592. Threonine 593 is modified (phosphothreonine). At serine 595 the chain carries Phosphoserine. 2 stretches are compositionally biased toward polar residues: residues 766–778 and 803–825; these read SGQQ…SAAP and LQSQ…SLQN. The segment covering 1006 to 1028 has biased composition (polar residues); it reads VNVYNPSHSDSLASQQSVASHPR. The segment at 1019 to 1890 is required for localization to endoplasmic reticulum exit sites; that stretch reads SQQSVASHPR…QQVERQIKEG (872 aa). Serine 1069 bears the Phosphoserine mark. Residues 1080 to 1101 are compositionally biased toward polar residues; sequence ELSNPESLPAQGQAQNSAQSPA. Residues 1101–1400 are interaction with MIA3; sequence ASLVLVDAGQ…EAPLPPGSFH (300 aa). A required for endoplasmic reticulum localization region spans residues 1102-1405; it reads SLVLVDAGQQ…PGSFHGDFAY (304 aa). Low complexity predominate over residues 1118-1131; the sequence is QSSSVSLVSSGSGQ. Pro residues predominate over residues 1138-1151; the sequence is QPWPQPVPALAPGP. Phosphoserine is present on residues serine 1207, serine 1229, and serine 1305. Positions 1215-1248 are disordered; the sequence is YPEPERPSSRASHSSERPPPRQGYPEGYYSSKSG. The segment covering 1216–1233 has biased composition (basic and acidic residues); sequence PEPERPSSRASHSSERPP. Positions 1307 to 1322 are enriched in basic and acidic residues; it reads FGDRPEKRDNNWRYDP. The tract at residues 1307–1378 is disordered; it reads FGDRPEKRDN…SLSSHSHQSQ (72 aa). The residue at position 1325 (threonine 1325) is a Phosphothreonine. A phosphoserine mark is found at serine 1327, serine 1347, serine 1350, serine 1356, serine 1359, serine 1362, serine 1369, serine 1573, and serine 1601. A compositionally biased stretch (basic and acidic residues) spans 1333–1354; it reads DPHRDPYGEEVDRRSVHSEHSA. Residues 1356–1375 show a composition bias toward low complexity; sequence SLHSAHSLASRRSSLSSHSH. Residues 1434–1890 form a central conserved domain (CCD); mediates interaction with RNF183, LRRK2 and SEC13 region; that stretch reads QVSSRPTSPE…QQVERQIKEG (457 aa). The residue at position 1907 (threonine 1907) is a Phosphothreonine. Phosphoserine is present on residues serine 1939, serine 1964, serine 2022, and serine 2042. Disordered regions lie at residues 2049-2110, 2141-2181, and 2226-2328; these read KFAN…SWFF, VNLN…PVNM, and NLFV…MPFY. Phosphothreonine is present on threonine 2054. Phosphoserine is present on residues serine 2056, serine 2073, and serine 2083. Basic and acidic residues predominate over residues 2087 to 2106; it reads ETKRPGQAAKKETKEPKKGE. Residues 2106–2357 form a required for interaction with SEC23A region; that stretch reads ESWFFRWLPG…IGQRKHLVLN (252 aa). Serine 2271 and serine 2291 each carry phosphoserine. Composition is skewed to low complexity over residues 2289–2302 and 2310–2324; these read ELSR…LSRE and APGD…PSGA.

Belongs to the SEC16 family. As to quaternary structure, SEC16A and SEC16B are each present in multiple copies in a heteromeric complex. Interacts with SEC23A. Interacts with RNF183 and RNF152. Interacts with LRRK2 (via ROC domain). Interacts with SEC13. Interacts with RAB10. Interacts with MIA3. Interacts with GORASP2 in response to ER stress. Ubiquitous. Expressed at higher levels in the pancreas.

The protein localises to the endoplasmic reticulum membrane. Its subcellular location is the golgi apparatus membrane. It localises to the cytoplasm. It is found in the perinuclear region. The protein resides in the cytosol. The protein localises to the microsome membrane. In terms of biological role, acts as a molecular scaffold that plays a key role in the organization of the endoplasmic reticulum exit sites (ERES), also known as transitional endoplasmic reticulum (tER). SAR1A-GTP-dependent assembly of SEC16A on the ER membrane forms an organized scaffold defining an ERES. Required for secretory cargo traffic from the endoplasmic reticulum to the Golgi apparatus. Mediates the recruitment of MIA3/TANGO to ERES. Regulates both conventional (ER/Golgi-dependent) and GORASP2-mediated unconventional (ER/Golgi-independent) trafficking of CFTR to cell membrane. Positively regulates the protein stability of E3 ubiquitin-protein ligases RNF152 and RNF183 and the ER localization of RNF183. Acts as a RAB10 effector in the regulation of insulin-induced SLC2A4/GLUT4 glucose transporter-enriched vesicles delivery to the cell membrane in adipocytes. This chain is Protein transport protein Sec16A (SEC16A), found in Homo sapiens (Human).